A 609-amino-acid chain; its full sequence is Non-structural glycoprotein (609 aa).

Positions 1–24 (MDFLRQCTLIQVMILAITIRLTHG) are cleaved as a signal peptide. The Extracellular portion of the chain corresponds to 25–581 (GWTNFPESCV…EKDYWHEEYN (557 aa)). Asn87, Asn375, Asn465, Asn472, Asn478, Asn506, Asn529, Asn551, and Asn562 each carry an N-linked (GlcNAc...) asparagine; by host glycan. The helical transmembrane segment at 582–599 (MWGLSGLSFLLLLALFYN) threads the bilayer. Residues 600 to 609 (KIKRKIKRKS) lie on the Cytoplasmic side of the membrane.

This sequence belongs to the ephemerovirus glycoprotein family.

The protein localises to the membrane. This Adelaide River virus (ARV) protein is Non-structural glycoprotein (GNS).